The primary structure comprises 70 residues: SPbeta prophage-derived uncharacterized protein YotJ (70 aa).

The protein is SPbeta prophage-derived uncharacterized protein YotJ (yotJ) of Bacillus subtilis (strain 168).